Here is a 608-residue protein sequence, read N- to C-terminus: Alpha-glycerophosphate oxidase (608 aa).

21–49 (DLLIIGGGITGAGVALQAAASGLETGLIE) serves as a coordination point for FAD. The disordered stretch occupies residues 393–418 (SAVSKLESSTSEKHLDPSAVSRGSSL).

This sequence belongs to the FAD-dependent glycerol-3-phosphate dehydrogenase family. It depends on FAD as a cofactor.

Its subcellular location is the cell membrane. It carries out the reaction sn-glycerol 3-phosphate + O2 = dihydroxyacetone phosphate + H2O2. It participates in membrane lipid metabolism; glycerophospholipid metabolism. In Streptococcus pneumoniae serotype 4 (strain ATCC BAA-334 / TIGR4), this protein is Alpha-glycerophosphate oxidase (glpO).